The following is a 151-amino-acid chain: HTH-type transcriptional regulator FL11 (151 aa).

Residues 5–66 enclose the HTH asnC-type domain; that stretch reads LDDIDKKIIE…VVNPEALGYN (62 aa). Residues 24-43 constitute a DNA-binding region (H-T-H motif); sequence LREISKITGLAESTIHERIK. Position 98–104 (98–104) interacts with L-arginine; that stretch reads ETTGDYD. Residues Asn-118, Asp-122, and 133 to 135 each bind L-lysine; that span reads THT. L-arginine-binding positions include Asp-122 and 133-135; that span reads THT.

In terms of assembly, homodimer. Binds DNA as a dimer and an octamer.

In the famine mode, FL11 forms dimers and acts as a repressor, leading to growth arrest. In the feast mode, in the presence of high concentrations of lysine or arginine, four dimers assemble into an octamer and cover the fl11 and lysine biosynthesis promoters. This leads to the inhibition of fl11 expression and lysine biosynthesis, decrease of the FL11 concentration in the cell, derepression of the target genes and activation of the metabolism. In terms of biological role, DNA-binding protein involved in the repression of transcription of a large number of genes, thereby arresting growth, in response to environmental changes. The protein is HTH-type transcriptional regulator FL11 of Pyrococcus furiosus (strain ATCC 43587 / DSM 3638 / JCM 8422 / Vc1).